The chain runs to 422 residues: Carboxypeptidase B2 (422 aa).

An N-terminal signal peptide occupies residues 1 to 21 (MKLYGLGVLVAIILYEKHGLA). The propeptide at 22-113 (FQSGHVLSAL…QTSNDTVSPR (92 aa)) is activation peptide. N-linked (GlcNAc...) asparagine glycans are attached at residues Asn-43, Asn-72, Asn-84, and Asn-107. Positions 121–418 (QYHSLNEIYS…AAVSKIAWHV (298 aa)) constitute a Peptidase M14 domain. Cys-177 and Cys-190 form a disulfide bridge. Residues His-180 and Glu-183 each contribute to the Zn(2+) site. Substrate-binding positions include 180-183 (HARE) and Arg-238. The N-linked (GlcNAc...) asparagine glycan is linked to Asn-240. 2 disulfide bridges follow: Cys-249–Cys-273 and Cys-264–Cys-278. 255 to 256 (NR) is a substrate binding site. His-309 contacts Zn(2+). Substrate is bound at residue 310–311 (SY). N-linked (GlcNAc...) asparagine glycosylation is present at Asn-322. Position 362 (Tyr-362) interacts with substrate. Residue Glu-384 is the Proton donor/acceptor of the active site.

The protein belongs to the peptidase M14 family. It depends on Zn(2+) as a cofactor. In terms of tissue distribution, plasma; synthesized in the liver.

It is found in the secreted. The enzyme catalyses Release of C-terminal Arg and Lys from a polypeptide.. With respect to regulation, TAFI/CPB2 is unique among carboxypeptidases in that it spontaneously inactivates with a short half-life, a property that is crucial for its role in controlling blood clot lysis. The zymogen is stabilized by interactions with the activation peptide. Release of the activation peptide increases a dynamic flap mobility and in time this leads to conformational changes that disrupt the catalytic site and expose a cryptic thrombin-cleavage site present at Arg-323. Cleaves C-terminal arginine or lysine residues from biologically active peptides such as kinins or anaphylatoxins in the circulation thereby regulating their activities. Down-regulates fibrinolysis by removing C-terminal lysine residues from fibrin that has already been partially degraded by plasmin. This chain is Carboxypeptidase B2 (Cpb2), found in Rattus norvegicus (Rat).